The following is a 212-amino-acid chain: Large ribosomal subunit protein bL25 (212 aa).

Positions 1-25 (MSQSTIHKIAVKKRTETGKNENNRL) are disordered. Basic and acidic residues predominate over residues 13–24 (KRTETGKNENNR).

It belongs to the bacterial ribosomal protein bL25 family. CTC subfamily. As to quaternary structure, part of the 50S ribosomal subunit; part of the 5S rRNA/L5/L18/L25 subcomplex. Contacts the 5S rRNA. Binds to the 5S rRNA independently of L5 and L18.

This is one of the proteins that binds to the 5S RNA in the ribosome where it forms part of the central protuberance. The sequence is that of Large ribosomal subunit protein bL25 from Leptospira borgpetersenii serovar Hardjo-bovis (strain L550).